The chain runs to 469 residues: Uronate isomerase (469 aa).

This sequence belongs to the metallo-dependent hydrolases superfamily. Uronate isomerase family.

It carries out the reaction D-glucuronate = D-fructuronate. It catalyses the reaction aldehydo-D-galacturonate = keto-D-tagaturonate. It functions in the pathway carbohydrate metabolism; pentose and glucuronate interconversion. The protein is Uronate isomerase of Corynebacterium efficiens (strain DSM 44549 / YS-314 / AJ 12310 / JCM 11189 / NBRC 100395).